The primary structure comprises 426 residues: Histidine--tRNA ligase (426 aa).

Belongs to the class-II aminoacyl-tRNA synthetase family.

It is found in the cytoplasm. It carries out the reaction tRNA(His) + L-histidine + ATP = L-histidyl-tRNA(His) + AMP + diphosphate + H(+). This chain is Histidine--tRNA ligase, found in Saccharolobus islandicus (strain Y.N.15.51 / Yellowstone #2) (Sulfolobus islandicus).